Here is a 539-residue protein sequence, read N- to C-terminus: Protein PNS1 (539 aa).

Positions 1–38 (MPLNEKYERPPQPPPAYDPNHRPPSSSENSAAANVNDG) are disordered. At 1 to 81 (MPLNEKYERP…NDNKPRWNDW (81 aa)) the chain is on the cytoplasmic side. The segment covering 25-36 (SSSENSAAANVN) has biased composition (low complexity). Residues 82–102 (PFTIFFLCTVGGFIAIAAITL) form a helical membrane-spanning segment. The Extracellular portion of the chain corresponds to 103–129 (RAWSQTYSSTGSGIYDGVNTGTLNTNA). Residues 130–150 (AILLVFVCIIALVFSVLGLTL) form a helical membrane-spanning segment. Topologically, residues 151-157 (CRIFPKQ) are cytoplasmic. A helical transmembrane segment spans residues 158 to 178 (FIYCGMVINLVASLGTAIMYM). Residues 179–182 (SLRY) are Extracellular-facing. Residues 183-203 (WSAGIVFLVFTFMTAWCYWGM) traverse the membrane as a helical segment. The Cytoplasmic segment spans residues 204–226 (RSRIPLSVAVLKVVVDAMKKCPQ). Residues 227–247 (IFFVSFVGALVASAFGFLFSA) form a helical membrane-spanning segment. Residues 248–274 (VIVATYIKYDPNSSNGGCDVSGGSCSH) are Extracellular-facing. Asn259 carries an N-linked (GlcNAc...) asparagine glycan. The chain crosses the membrane as a helical span at residues 275 to 295 (SKLIGVLVVVFFCGYYISEVI). The Cytoplasmic portion of the chain corresponds to 296–332 (RNVIHCVISGVFGSWYYMSKSDQGMPRWPAFGALKRA). A helical transmembrane segment spans residues 333–353 (MTYSFGSICFGSLLVALIDLL). Over 354–371 (RQILQMIRHDVTSSGGGQ) the chain is Extracellular. Residues 372–392 (IAIQILFMVFDWIIGFLKWLA) traverse the membrane as a helical segment. At 393–436 (EYFNHYAYSFIALYGKPYLRAAKETWYMLREKGMDALINDNLIN) the chain is on the cytoplasmic side. Residues 437–457 (IALGLFSMFASYMTALFTFLY) form a helical membrane-spanning segment. The Extracellular portion of the chain corresponds to 458–473 (LRFTSPQYNSNGAYNG). Residues 474–494 (ALMAFSFVIALQICNIATEAI) form a helical membrane-spanning segment. Residues 495 to 539 (RSGTATFFVALGNDPEVFHHSYPHRFDEIFRAYPDVLRKLSHQNV) are Cytoplasmic-facing.

The protein belongs to the CTL (choline transporter-like) family.

Its subcellular location is the cell membrane. Its function is as follows. Probably involved in transport through the plasma membrane. This chain is Protein PNS1 (PNS1), found in Saccharomyces cerevisiae (strain ATCC 204508 / S288c) (Baker's yeast).